The chain runs to 374 residues: Alcohol dehydrogenase class-3 (374 aa).

Ala-2 bears the N-acetylalanine mark. Zn(2+) is bound by residues Cys-45, His-67, Cys-97, Cys-100, Cys-103, Cys-111, and Cys-174. Lys-233 bears the N6-succinyllysine mark. The residue at position 247 (Ser-247) is a Phosphoserine. N6-succinyllysine is present on Lys-315. Ser-324 carries the phosphoserine modification.

The protein belongs to the zinc-containing alcohol dehydrogenase family. Class-III subfamily. In terms of assembly, homodimer. The cofactor is Zn(2+).

The protein localises to the cytoplasm. It catalyses the reaction a primary alcohol + NAD(+) = an aldehyde + NADH + H(+). It carries out the reaction a secondary alcohol + NAD(+) = a ketone + NADH + H(+). The enzyme catalyses S-(hydroxymethyl)glutathione + NADP(+) = S-formylglutathione + NADPH + H(+). The catalysed reaction is S-(hydroxymethyl)glutathione + NAD(+) = S-formylglutathione + NADH + H(+). It catalyses the reaction 20-oxo-(5Z,8Z,11Z,14Z)-eicosatetraenoate + NAD(+) + H2O = (5Z,8Z,11Z,14Z)-eicosatetraenedioate + NADH + 2 H(+). It carries out the reaction 20-hydroxy-(5Z,8Z,11Z,14Z)-eicosatetraenoate + NAD(+) = 20-oxo-(5Z,8Z,11Z,14Z)-eicosatetraenoate + NADH + H(+). The enzyme catalyses S-nitrosoglutathione + NADH + H(+) = S-(hydroxysulfenamide)glutathione + NAD(+). Catalyzes the oxidation of long-chain primary alcohols and the oxidation of S-(hydroxymethyl) glutathione. Also oxidizes long chain omega-hydroxy fatty acids, such as 20-HETE, producing both the intermediate aldehyde, 20-oxoarachidonate and the end product, a dicarboxylic acid, (5Z,8Z,11Z,14Z)-eicosatetraenedioate. Class-III ADH is remarkably ineffective in oxidizing ethanol. Required for clearance of cellular formaldehyde, a cytotoxic and carcinogenic metabolite that induces DNA damage. Also acts as a S-nitroso-glutathione reductase by catalyzing the NADH-dependent reduction of S-nitrosoglutathione, thereby regulating protein S-nitrosylation. The chain is Alcohol dehydrogenase class-3 from Bos taurus (Bovine).